The following is a 246-amino-acid chain: Probable transcriptional regulatory protein RD1_2018 (246 aa).

It belongs to the TACO1 family.

It localises to the cytoplasm. This is Probable transcriptional regulatory protein RD1_2018 from Roseobacter denitrificans (strain ATCC 33942 / OCh 114) (Erythrobacter sp. (strain OCh 114)).